We begin with the raw amino-acid sequence, 857 residues long: Protein dalmatian (857 aa).

Disordered stretches follow at residues Met1–Ile50 and Val146–Arg194. Polar residues-rich tracts occupy residues Val146–Lys156 and Ser165–Pro176. 4 positions are modified to phosphoserine: Ser173, Ser175, Ser184, and Ser222. Basic residues predominate over residues Gly251–Val271. A disordered region spans residues Gly251 to Val281. Position 405 is a phosphoserine (Ser405). Disordered regions lie at residues Ser470 to Asn514 and Pro737 to Glu830. The span at Lys771 to Arg781 shows a compositional bias: basic and acidic residues. A compositionally biased stretch (acidic residues) spans Ser797–Asp806. Positions Ser807–Glu816 are enriched in basic and acidic residues. The span at Lys817 to Arg826 shows a compositional bias: basic residues.

It is found in the nucleus. Its subcellular location is the chromosome. Functionally, regulator of sister chromatid cohesion in mitosis. Probably involved in development of the central nervous system. The polypeptide is Protein dalmatian (dmt) (Drosophila melanogaster (Fruit fly)).